The following is a 1422-amino-acid chain: DNA-directed RNA polymerase subunit beta (1422 aa).

Positions 1392 to 1422 (QAAREAAERDLGGGPLGAPRGAVASGEKSSA) are disordered.

It belongs to the RNA polymerase beta chain family. In terms of assembly, the RNAP catalytic core consists of 2 alpha, 1 beta, 1 beta' and 1 omega subunit. When a sigma factor is associated with the core the holoenzyme is formed, which can initiate transcription.

The enzyme catalyses RNA(n) + a ribonucleoside 5'-triphosphate = RNA(n+1) + diphosphate. Its function is as follows. DNA-dependent RNA polymerase catalyzes the transcription of DNA into RNA using the four ribonucleoside triphosphates as substrates. The sequence is that of DNA-directed RNA polymerase subunit beta from Anaeromyxobacter dehalogenans (strain 2CP-C).